The following is a 191-amino-acid chain: Fe/S biogenesis protein NfuA (191 aa).

Cys149 and Cys152 together coordinate [4Fe-4S] cluster.

This sequence belongs to the NfuA family. As to quaternary structure, homodimer. [4Fe-4S] cluster serves as cofactor.

Functionally, involved in iron-sulfur cluster biogenesis. Binds a 4Fe-4S cluster, can transfer this cluster to apoproteins, and thereby intervenes in the maturation of Fe/S proteins. Could also act as a scaffold/chaperone for damaged Fe/S proteins. This Salmonella typhi protein is Fe/S biogenesis protein NfuA.